A 192-amino-acid polypeptide reads, in one-letter code: Fe/S biogenesis protein NfuA (192 aa).

[4Fe-4S] cluster is bound by residues Cys-149 and Cys-152.

It belongs to the NfuA family. In terms of assembly, homodimer. [4Fe-4S] cluster serves as cofactor.

Its function is as follows. Involved in iron-sulfur cluster biogenesis. Binds a 4Fe-4S cluster, can transfer this cluster to apoproteins, and thereby intervenes in the maturation of Fe/S proteins. Could also act as a scaffold/chaperone for damaged Fe/S proteins. In Proteus mirabilis (strain HI4320), this protein is Fe/S biogenesis protein NfuA.